The sequence spans 149 residues: Myoglobin (149 aa).

Ala2 is modified (N-acetylalanine). In terms of domain architecture, Globin spans 2 to 143; sequence ADWDKVNSVW…ICSDIEKEYK (142 aa). His89 serves as a coordination point for heme b.

The protein belongs to the globin family. In terms of assembly, monomeric.

The protein resides in the cytoplasm. Its subcellular location is the sarcoplasm. The enzyme catalyses Fe(III)-heme b-[protein] + nitric oxide + H2O = Fe(II)-heme b-[protein] + nitrite + 2 H(+). It catalyses the reaction H2O2 + AH2 = A + 2 H2O. Functionally, monomeric heme protein which primary function is to store oxygen and facilitate its diffusion within muscle tissues. Reversibly binds oxygen through a pentacoordinated heme iron and enables its timely and efficient release as needed during periods of heightened demand. Depending on the oxidative conditions of tissues and cells, and in addition to its ability to bind oxygen, it also has a nitrite reductase activity whereby it regulates the production of bioactive nitric oxide. Under stress conditions, like hypoxia and anoxia, it also protects cells against reactive oxygen species thanks to its pseudoperoxidase activity. The sequence is that of Myoglobin (mb) from Galeorhinus galeus (Tope shark).